The sequence spans 784 residues: ATP-dependent 6-phosphofructokinase, platelet type (784 aa).

Position 1 is an N-acetylmethionine (M1). Residues 1–399 (MDADDSRAPK…NLNTYKRLAI (399 aa)) are N-terminal catalytic PFK domain 1. Residues S6, S12, and S21 each carry the phosphoserine modification. ATP is bound by residues G34, 97–98 (RC), and 127–130 (GDGS). Residue D128 participates in Mg(2+) binding. Position 142 is a phosphoserine (S142). Residues 173-175 (SID), R210, 217-219 (MGR), E273, R301, and 307-310 (HVQR) each bind substrate. D175 serves as the catalytic Proton acceptor. S386 is subject to Phosphoserine. K395 is subject to N6-acetyllysine. The segment at 400–411 (KLPDDQIPKTNC) is interdomain linker. The interval 412–784 (NVAVINVGAP…QLEHVQPWSV (373 aa)) is C-terminal regulatory PFK domain 2. R481 provides a ligand contact to beta-D-fructose 2,6-bisphosphate. At K486 the chain carries N6-acetyllysine. Residues 538–542 (TVSNN), R576, 583–585 (MGG), and E639 each bind beta-D-fructose 2,6-bisphosphate. O-linked (GlcNAc) serine glycosylation is present at S540. Y651 is modified (phosphotyrosine). Beta-D-fructose 2,6-bisphosphate is bound by residues R665 and 671–674 (HMQQ). K688 carries the post-translational modification N6-acetyllysine. Position 744 (R744) interacts with beta-D-fructose 2,6-bisphosphate. S783 is subject to Phosphoserine.

Belongs to the phosphofructokinase type A (PFKA) family. ATP-dependent PFK group I subfamily. Eukaryotic two domain clade 'E' sub-subfamily. Homo- and heterotetramers. Phosphofructokinase (PFK) enzyme functions as a tetramer composed of different combinations of 3 types of subunits, called PFKM (M), PFKL (L) and PFKP (P). The composition of the PFK tetramer differs according to the tissue type it is present in. The kinetic and regulatory properties of the tetrameric enzyme are dependent on the subunit composition, hence can vary across tissues. Interacts with ATG4B; promoting phosphorylation of ATG4B. It depends on Mg(2+) as a cofactor. GlcNAcylation decreases enzyme activity. Post-translationally, phosphorylation at Ser-386 promotes interaction with ATG4B.

It localises to the cytoplasm. It carries out the reaction beta-D-fructose 6-phosphate + ATP = beta-D-fructose 1,6-bisphosphate + ADP + H(+). It functions in the pathway carbohydrate degradation; glycolysis; D-glyceraldehyde 3-phosphate and glycerone phosphate from D-glucose: step 3/4. Its activity is regulated as follows. Allosterically activated by ADP, AMP, or fructose 2,6-bisphosphate, and allosterically inhibited by ATP or citrate. Functionally, catalyzes the phosphorylation of D-fructose 6-phosphate to fructose 1,6-bisphosphate by ATP, the first committing step of glycolysis. This Pongo abelii (Sumatran orangutan) protein is ATP-dependent 6-phosphofructokinase, platelet type (PFKP).